A 434-amino-acid chain; its full sequence is Eukaryotic peptide chain release factor subunit 1-2 (434 aa).

N-acetylalanine is present on Ala-2.

This sequence belongs to the eukaryotic release factor 1 family. In terms of assembly, heterodimer of two subunits, one of which binds GTP.

The protein localises to the cytoplasm. Functionally, directs the termination of nascent peptide synthesis (translation) in response to the termination codons UAA, UAG and UGA. Modulates plant growth and development. The protein is Eukaryotic peptide chain release factor subunit 1-2 of Arabidopsis thaliana (Mouse-ear cress).